The following is a 124-amino-acid chain: Small ribosomal subunit protein uS13 (124 aa).

Positions 94-124 (RGLPVRGQRTKTNARTRKGPKRTIAGKKKAR) are disordered.

Belongs to the universal ribosomal protein uS13 family. In terms of assembly, part of the 30S ribosomal subunit. Forms a loose heterodimer with protein S19. Forms two bridges to the 50S subunit in the 70S ribosome.

Functionally, located at the top of the head of the 30S subunit, it contacts several helices of the 16S rRNA. In the 70S ribosome it contacts the 23S rRNA (bridge B1a) and protein L5 of the 50S subunit (bridge B1b), connecting the 2 subunits; these bridges are implicated in subunit movement. Contacts the tRNAs in the A and P-sites. In Mycolicibacterium vanbaalenii (strain DSM 7251 / JCM 13017 / BCRC 16820 / KCTC 9966 / NRRL B-24157 / PYR-1) (Mycobacterium vanbaalenii), this protein is Small ribosomal subunit protein uS13.